The sequence spans 485 residues: Probable L-xylulose kinase (485 aa).

It belongs to the FGGY kinase family. Homodimer.

The enzyme catalyses L-xylulose + ATP = L-xylulose 5-phosphate + ADP + H(+). The polypeptide is Probable L-xylulose kinase (lyx) (Haemophilus influenzae (strain ATCC 51907 / DSM 11121 / KW20 / Rd)).